A 300-amino-acid chain; its full sequence is Pleckstrin homology domain-containing family A member 3 (300 aa).

In terms of domain architecture, PH spans 1–93 (MEGVLYKWTN…WLVALGSSKA (93 aa)). The segment at 1 to 100 (MEGVLYKWTN…SKACLTDTRT (100 aa)) is interaction with SACM1L. An interaction with VAPA and VAPB region spans residues 97–300 (DTRTKKEKEI…SEDTLPSFSS (204 aa)). The segment at 197-300 (PVSPSPVQMM…SEDTLPSFSS (104 aa)) is disordered. 2 positions are modified to phosphoserine: Ser236 and Ser244. The span at 279–290 (EESRLMAKKQSE) shows a compositional bias: basic and acidic residues.

As to quaternary structure, interacts with GTP-bound ARF1. Interacts with SACM1L and VAPA and/or VAPB to form a ternary complex. As to expression, widely expressed.

It is found in the golgi apparatus. The protein resides in the trans-Golgi network membrane. Its function is as follows. Plays a role in regulation of vesicular cargo transport from the trans-Golgi network (TGN) to the plasma membrane. Regulates Golgi phosphatidylinositol 4-phosphate (PtdIns(4)P) levels and activates the PtdIns(4)P phosphatase activity of SACM1L when it binds PtdIns(4)P in 'trans' configuration. Binds preferentially to PtdIns(4)P. Negatively regulates APOB secretion from hepatocytes. This Homo sapiens (Human) protein is Pleckstrin homology domain-containing family A member 3 (PLEKHA3).